The chain runs to 356 residues: Holliday junction branch migration complex subunit RuvB (356 aa).

Residues T4 to Y191 are large ATPase domain (RuvB-L). ATP is bound by residues L30, R31, G72, K75, T76, T77, E138–Y140, R181, Y191, and R228. T76 contributes to the Mg(2+) binding site. Residues D192 to D262 form a small ATPAse domain (RuvB-S) region. The interval P265–K356 is head domain (RuvB-H). DNA contacts are provided by R301, R320, and R325.

The protein belongs to the RuvB family. Homohexamer. Forms an RuvA(8)-RuvB(12)-Holliday junction (HJ) complex. HJ DNA is sandwiched between 2 RuvA tetramers; dsDNA enters through RuvA and exits via RuvB. An RuvB hexamer assembles on each DNA strand where it exits the tetramer. Each RuvB hexamer is contacted by two RuvA subunits (via domain III) on 2 adjacent RuvB subunits; this complex drives branch migration. In the full resolvosome a probable DNA-RuvA(4)-RuvB(12)-RuvC(2) complex forms which resolves the HJ.

It is found in the cytoplasm. It catalyses the reaction ATP + H2O = ADP + phosphate + H(+). Functionally, the RuvA-RuvB-RuvC complex processes Holliday junction (HJ) DNA during genetic recombination and DNA repair, while the RuvA-RuvB complex plays an important role in the rescue of blocked DNA replication forks via replication fork reversal (RFR). RuvA specifically binds to HJ cruciform DNA, conferring on it an open structure. The RuvB hexamer acts as an ATP-dependent pump, pulling dsDNA into and through the RuvAB complex. RuvB forms 2 homohexamers on either side of HJ DNA bound by 1 or 2 RuvA tetramers; 4 subunits per hexamer contact DNA at a time. Coordinated motions by a converter formed by DNA-disengaged RuvB subunits stimulates ATP hydrolysis and nucleotide exchange. Immobilization of the converter enables RuvB to convert the ATP-contained energy into a lever motion, pulling 2 nucleotides of DNA out of the RuvA tetramer per ATP hydrolyzed, thus driving DNA branch migration. The RuvB motors rotate together with the DNA substrate, which together with the progressing nucleotide cycle form the mechanistic basis for DNA recombination by continuous HJ branch migration. Branch migration allows RuvC to scan DNA until it finds its consensus sequence, where it cleaves and resolves cruciform DNA. In Burkholderia lata (strain ATCC 17760 / DSM 23089 / LMG 22485 / NCIMB 9086 / R18194 / 383), this protein is Holliday junction branch migration complex subunit RuvB.